The following is a 495-amino-acid chain: MDSFPLLAALFFIAATITFLSFRRRRNLPPGPFPYPIVGNMLQLGANPHQVFAKLSKRYGPLMSIHLGSLYTVIVSSPEMAKEILHRHGQVFSGRTIAQAVHACDHDKISMGFLPVASEWRDMRKICKEQMFSNQSMEASQGLRRQKLQQLLDHVQKCSDSGRAVDIREAAFITTLNLMSATLFSSQATEFDSKATMEFKEIIEGVATIVGVPNFADYFPILRPFDPQGVKRRADVFFGKLLAKIEGYLNERLESKRANPNAPKKDDFLEIVVDIIQANEFKLKTHHFTHLMLDLFVGGSDTNTTSIEWAMSELVMNPDKMARLKAELKSVAGDEKIVDESAMPKLPYLQAVIKEVMRIHPPGPLLLPRKAESDQEVNGYLIPKGTQILINAYAIGRDPSIWTDPETFDPERFLDNKIDFKGQDYELLPFGSGRRVCPGMPLATRILHMATATLVHNFDWKLEDDSTAAADHAGELFGVAVRRAVPLRIIPIVKS.

A topological domain (lumenal) is located at residue methionine 1. Residues 2 to 22 (DSFPLLAALFFIAATITFLSF) form a helical membrane-spanning segment. Topologically, residues 23-495 (RRRRNLPPGP…PLRIIPIVKS (473 aa)) are cytoplasmic. Cysteine 437 is a binding site for heme.

Belongs to the cytochrome P450 family. Heme is required as a cofactor. As to expression, expression is more abundant in the rhizome.

The protein resides in the endoplasmic reticulum membrane. It catalyses the reaction abieta-8,11,13-triene + reduced [NADPH--hemoprotein reductase] + O2 = ferruginol + oxidized [NADPH--hemoprotein reductase] + H2O + H(+). In terms of biological role, cytochrome P450 enzyme (CYP) which catalyzes a unique two-electron oxidation cascade on abieta-8,11,13-triene to produce ferruginol, an intermediate in tanshinone biosynthesis. This Salvia miltiorrhiza (Chinese sage) protein is Ferruginol synthase.